The chain runs to 203 residues: Reticulon-like protein B12 (203 aa).

A Reticulon domain is found at 24 to 203 (VADVMLWRKK…WANPENKKLS (180 aa)). Helical transmembrane passes span 34–54 (NVSVGIVTVTIASWMVFEAFA), 55–75 (YTIFTLISSVLLLLLSILFLW), and 132–152 (VAVSLFLLSLIGSLMDFQTLC).

Its subcellular location is the endoplasmic reticulum membrane. The polypeptide is Reticulon-like protein B12 (RTNLB12) (Arabidopsis thaliana (Mouse-ear cress)).